The chain runs to 283 residues: MKKKVLALGAAITLVAPLQSVAFAHENDGGQRFGVIPRWSAEDKHKEGVNSHLWIVNRAIDIMSRNTTLVKQDRVALLNEWRTELENGIYAADYENPYYDNSTFASHFYDPDNGKTYIPYAKQAKETGAKYFKLAGESYKNKDMKQAFFYLGLSLHYLGDVNQPMHAANFTNLSYPQGFHSKYENFVDTIKDNYKVTDGNGYWNWKGTNPEDWIHGAAVVAKQDYAGIVNDNTKDWFVRAAVSQEYADKWRAEVTPMTGKRLMDAQRVTAGYIQLWFDTYGNR.

An N-terminal signal peptide occupies residues 1–24 (MKKKVLALGAAITLVAPLQSVAFA). The propeptide occupies 25–38 (HENDGGQRFGVIPR). Trp-39, His-52, Asp-93, His-107, His-156, Asp-160, His-166, His-180, and Glu-184 together coordinate Zn(2+). Residues 39-283 (WSAEDKHKEG…QLWFDTYGNR (245 aa)) enclose the Zn-dependent PLC domain.

The protein belongs to the bacterial zinc-metallophospholipase C family. As to quaternary structure, monomer. It depends on Zn(2+) as a cofactor.

The enzyme catalyses a 1,2-diacyl-sn-glycero-3-phosphocholine + H2O = phosphocholine + a 1,2-diacyl-sn-glycerol + H(+). Required, with sphingomyelinase, to effect target cell lysis (hemolysis). This is Phospholipase C (cerA) from Bacillus cereus.